The primary structure comprises 151 residues: Protein A151R (151 aa).

Positions 102, 109, 132, and 135 each coordinate Zn(2+). Positions 131–135 (WCTKC) match the Thioredoxin WCTKC motif motif.

This sequence belongs to the asfivirus A151R family. As to quaternary structure, monomer. Homodimer. Interacts with protein B119L. Interacts with membrane protein E248R. The cofactor is Zn(2+).

In terms of biological role, may participate in a redox cascade for the formation of disulfide bonds in viral proteins. In African swine fever virus (strain Badajoz 1971 Vero-adapted) (Ba71V), this protein is Protein A151R.